A 364-amino-acid polypeptide reads, in one-letter code: GDSL esterase/lipase EXL3 (364 aa).

The N-terminal stretch at 1–32 (MKDNSSWSCSCSWSSWKICLLSVLFLTETITA) is a signal peptide. Ser-50 (nucleophile) is an active-site residue. Active-site residues include Asp-339 and His-342.

It belongs to the 'GDSL' lipolytic enzyme family. In terms of tissue distribution, flower buds.

Its subcellular location is the secreted. The sequence is that of GDSL esterase/lipase EXL3 (EXL3) from Arabidopsis thaliana (Mouse-ear cress).